Here is a 67-residue protein sequence, read N- to C-terminus: Nigrocin-2GRc (67 aa).

Positions 1–22 are cleaved as a signal peptide; sequence MFTMKKSMLLLFFLGTISLSLC. Positions 23–46 are excised as a propeptide; it reads EQERNADEEERRDEEVAKMEEIKR. The cysteines at positions 61 and 67 are disulfide-linked.

In terms of tissue distribution, expressed by the skin glands.

It is found in the secreted. Its function is as follows. Antimicrobial peptide active at least against the Gram-positive bacterium S.aureus but with otherwise unclear activity spectrum. Lacks hemolytic activity against rabbit or human erythrocytes. In Odorrana grahami (Yunnanfu frog), this protein is Nigrocin-2GRc.